The primary structure comprises 298 residues: 4-hydroxybenzoate octaprenyltransferase (298 aa).

7 helical membrane passes run 30-50 (IGTWLLMWPTLWALWLAAEGI), 54-74 (GTLLIFVIGVYVMRAAGCVVN), 105-125 (VLFAGLVIIAFGLVCLTNLPT), 148-168 (FPQVVLGAAFSWGIPMAFMAI), 218-238 (DRLMIGLLQALTLLLLAWVGL), 240-260 (LALGGFFWLGLAAMGAIFVFQ), and 275-295 (AFLNNHWAGLVVFAGIALSLW).

Belongs to the UbiA prenyltransferase family. The cofactor is Mg(2+).

It localises to the cell inner membrane. The catalysed reaction is all-trans-octaprenyl diphosphate + 4-hydroxybenzoate = 4-hydroxy-3-(all-trans-octaprenyl)benzoate + diphosphate. The protein operates within cofactor biosynthesis; ubiquinone biosynthesis. Its function is as follows. Catalyzes the prenylation of para-hydroxybenzoate (PHB) with an all-trans polyprenyl group. Mediates the second step in the final reaction sequence of ubiquinone-8 (UQ-8) biosynthesis, which is the condensation of the polyisoprenoid side chain with PHB, generating the first membrane-bound Q intermediate 3-octaprenyl-4-hydroxybenzoate. In Chromohalobacter salexigens (strain ATCC BAA-138 / DSM 3043 / CIP 106854 / NCIMB 13768 / 1H11), this protein is 4-hydroxybenzoate octaprenyltransferase.